The sequence spans 1163 residues: DNA-directed RNA polymerase subunit beta'' (1163 aa).

The Zn(2+) site is built by Cys-16, Cys-87, Cys-94, and Cys-97.

Belongs to the RNA polymerase beta' chain family. RpoC2 subfamily. In terms of assembly, in plastids the minimal PEP RNA polymerase catalytic core is composed of four subunits: alpha, beta, beta', and beta''. When a (nuclear-encoded) sigma factor is associated with the core the holoenzyme is formed, which can initiate transcription. Requires Zn(2+) as cofactor.

It is found in the plastid. The protein resides in the chloroplast. It carries out the reaction RNA(n) + a ribonucleoside 5'-triphosphate = RNA(n+1) + diphosphate. Functionally, DNA-dependent RNA polymerase catalyzes the transcription of DNA into RNA using the four ribonucleoside triphosphates as substrates. The chain is DNA-directed RNA polymerase subunit beta'' (rpoC2) from Pisum sativum (Garden pea).